A 297-amino-acid polypeptide reads, in one-letter code: Inosose dehydratase (297 aa).

This sequence belongs to the IolE/MocC family. Requires glutathione as cofactor. Co(2+) serves as cofactor. It depends on Mn(2+) as a cofactor.

It carries out the reaction scyllo-inosose = 3D-3,5/4-trihydroxycyclohexane-1,2-dione + H2O. Its pathway is polyol metabolism; myo-inositol degradation into acetyl-CoA; acetyl-CoA from myo-inositol: step 2/7. Functionally, catalyzes the dehydration of inosose (2-keto-myo-inositol, 2KMI or 2,4,6/3,5-pentahydroxycyclohexanone) to 3D-(3,5/4)-trihydroxycyclohexane-1,2-dione (D-2,3-diketo-4-deoxy-epi-inositol). This is Inosose dehydratase from Clostridium perfringens (strain ATCC 13124 / DSM 756 / JCM 1290 / NCIMB 6125 / NCTC 8237 / Type A).